A 122-amino-acid polypeptide reads, in one-letter code: UPF0102 protein CKL_1410 (122 aa).

The protein belongs to the UPF0102 family.

This chain is UPF0102 protein CKL_1410, found in Clostridium kluyveri (strain ATCC 8527 / DSM 555 / NBRC 12016 / NCIMB 10680 / K1).